We begin with the raw amino-acid sequence, 335 residues long: Fructose-1,6-bisphosphatase class 1 (335 aa).

Mg(2+)-binding residues include Glu90, Asp113, Leu115, and Asp116. Residues 116-119 (DGSS), Asn209, Tyr242, and Lys272 each bind substrate. A Mg(2+)-binding site is contributed by Glu278.

It belongs to the FBPase class 1 family. In terms of assembly, homotetramer. Requires Mg(2+) as cofactor.

The protein localises to the cytoplasm. It catalyses the reaction beta-D-fructose 1,6-bisphosphate + H2O = beta-D-fructose 6-phosphate + phosphate. Its pathway is carbohydrate biosynthesis; gluconeogenesis. This Mannheimia succiniciproducens (strain KCTC 0769BP / MBEL55E) protein is Fructose-1,6-bisphosphatase class 1.